We begin with the raw amino-acid sequence, 1197 residues long: Disease resistance-like protein CSA1 (1197 aa).

In terms of domain architecture, TIR spans 15–178 (PQDQVFINFR…IIIRKVKEIL (164 aa)). Residue Glu89 is part of the active site. The region spanning 210-480 (RIKQLEEKLR…ACFRSQDENY (271 aa)) is the NB-ARC domain. 10 LRR repeats span residues 614 to 636 (LNEVRYLHWLKFPLKEVPQDFNP), 638 to 659 (NLVDLKLPYSEIERVWEDNKDA), 694 to 716 (TALKEMHVDMENMKFLVFLNLRG), 728 to 749 (LISLKTLILSGCSKFKTFQVIS), 750 to 774 (DKLEALYLDGTAIKELPCDIGRLQR), 776 to 796 (VMLNMKGCKKLKRLPDSLGQL), 797 to 819 (KALEELILSGCSKLNEFPETWGN), 820 to 843 (MSRLEILLLDETAIKDMPKILSVR), 845 to 862 (LCLNKNEKISRLPDLLNK), and 863 to 889 (FSQLQWLHLKYCKNLTHVPQLPPNLQY).

It catalyses the reaction NAD(+) + H2O = ADP-D-ribose + nicotinamide + H(+). In terms of biological role, TIR-NB-LRR receptor-like protein that functions in photomorphogenic development. May function downstream of phytochrome B (phyB) signaling. This chain is Disease resistance-like protein CSA1, found in Arabidopsis thaliana (Mouse-ear cress).